Consider the following 265-residue polypeptide: Putative 2-aminoethylphosphonate transport system permease protein PhnV (265 aa).

Helical transmembrane passes span 13–33 (GVVA…VILM), 69–89 (LTIG…AALA), 104–124 (VFYL…LVAF), 131–151 (MNGT…AFTF), 185–205 (LPLL…LSMG), and 233–253 (NIAD…LLMM). Residues 65 to 253 (LLASLTIGFC…LVAITLLLMM (189 aa)) enclose the ABC transmembrane type-1 domain.

This sequence belongs to the binding-protein-dependent transport system permease family.

Its subcellular location is the cell inner membrane. In terms of biological role, probably part of the PhnSTUV complex (TC 3.A.1.11.5) involved in 2-aminoethylphosphonate import. Probably responsible for the translocation of the substrate across the membrane. In Salmonella typhimurium (strain LT2 / SGSC1412 / ATCC 700720), this protein is Putative 2-aminoethylphosphonate transport system permease protein PhnV (phnV).